The primary structure comprises 1483 residues: Cystic fibrosis transmembrane conductance regulator (1483 aa).

Residues 1 to 77 (MQRSPLEKAS…KLINALRRCF (77 aa)) lie on the Cytoplasmic side of the membrane. Residues 78-98 (FWKFMFYGILLYLGEVTKAVQ) form a helical membrane-spanning segment. In terms of domain architecture, ABC transmembrane type-1 1 spans 81–365 (FMFYGILLYL…WAVQTWYDSL (285 aa)). Residues 99-122 (PLLLGRIIASYDPDNKVERSIAIY) lie on the Extracellular side of the membrane. A helical transmembrane segment spans residues 123 to 146 (LGIGLCLLFVVRTLLLHPAIFGLH). Topologically, residues 147 to 195 (HIGMQMRIAMFSLIYKKTLKLSSRVLDKISIGQLISLLSNNLNKFDEGL) are cytoplasmic. Residues 196 to 216 (ALAHFVWIVPLQVTLLMGLLW) traverse the membrane as a helical segment. At 217-222 (ELLQAS) the chain is on the extracellular side. The helical transmembrane segment at 223 to 243 (AFCGLAFLIIVAFYQAGLGRM) threads the bilayer. The Cytoplasmic segment spans residues 244 to 298 (MMKYRDKRGGKINERLVITSEMIENIQSVKAYCWEEAMEKMIENLRQTELKLTRK). The chain crosses the membrane as a helical span at residues 299-319 (AAYVRYCNSSAFFFSGFFVVF). The Extracellular segment spans residues 320–339 (LSVLPYALMKGIILRKIFTT). A helical membrane pass occupies residues 340–358 (ISFCIVLRMAVTRQFPWAV). Residues 359–859 (QTWYDSLGAI…YLRYITIHKS (501 aa)) are Cytoplasmic-facing. ATP-binding positions include Trp-401, Ser-434, 458-465 (GSTGAGKT), and Gln-493. An ABC transporter 1 domain is found at 423–646 (NGDNSLFFSN…RPDFSSKLMG (224 aa)). Cys-524 is lipidated: S-palmitoyl cysteine. Ser-549 and Ser-660 each carry phosphoserine. Residues 654 to 832 (SAERRNSILT…EEINEEDLKE (179 aa)) form a disordered R region region. At Ser-670 the chain carries Phosphoserine; by PKA. A Phosphoserine modification is found at Ser-686. Lys-688 participates in a covalent cross-link: Glycyl lysine isopeptide (Lys-Gly) (interchain with G-Cter in ubiquitin). 2 positions are modified to phosphoserine: Ser-700 and Ser-712. Thr-717 carries the post-translational modification Phosphothreonine. 5 positions are modified to phosphoserine: Ser-737, Ser-768, Ser-791, Ser-796, and Ser-814. The chain crosses the membrane as a helical span at residues 860-880 (LIFVLIWCLIIFLAEVAVSLV). An ABC transmembrane type-1 2 domain is found at 860-1157 (LIFVLIWCLI…AVNSSIDVDS (298 aa)). Topologically, residues 881–920 (FLLLFEKSPRQDTGNVTKSSNNSSYGVIITNTSSYYIIYI) are extracellular. Asn-895, Asn-901, Asn-902, and Asn-911 each carry an N-linked (GlcNAc...) asparagine glycan. Residues 921-941 (YVGVADTLLALGLLRGLPLVH) traverse the membrane as a discontinuously helical segment. Residues 942 to 992 (TLITASKILHHKMLHSVLQAPMSTLNTLKAGGILNRFSKDIAILDDLLPLT) are Cytoplasmic-facing. Residues 993-1013 (IFDFIQLILIVIGAVIVVSVL) traverse the membrane as a helical segment. Over 1014–1015 (EP) the chain is Extracellular. The chain crosses the membrane as a helical span at residues 1016 to 1036 (YIFLATVPVIIAFVMLRAYFL). The Cytoplasmic segment spans residues 1037–1097 (HTSQQLKQLE…TANWFLYLST (61 aa)). A helical transmembrane segment spans residues 1098 to 1118 (LRWFQMRIEMIFVIFFIAVTF). Topologically, residues 1119 to 1132 (ISILTTGDGEGRVG) are extracellular. The chain crosses the membrane as a helical span at residues 1133 to 1153 (IILTLAMNIMNTLQWAVNSSI). The Cytoplasmic portion of the chain corresponds to 1154 to 1483 (DVDSLMRSVS…TEEEVQETRL (330 aa)). One can recognise an ABC transporter 2 domain in the interval 1213 to 1446 (MTVKDLTAKY…KSLFRQAISN (234 aa)). Residues Tyr-1222 and 1247-1254 (GRTGSGKS) contribute to the ATP site. Residues 1389–1483 (RTIKQAFADC…TEEEVQETRL (95 aa)) are interaction with GORASP2. Cys-1398 is lipidated: S-palmitoyl cysteine. 2 positions are modified to phosphoserine: Ser-1447 and Ser-1459. Over residues 1455–1465 (HRNSSKHKSRS) the composition is skewed to basic residues. A disordered region spans residues 1455–1483 (HRNSSKHKSRSKIAALKEETEEEVQETRL). The segment covering 1473 to 1483 (ETEEEVQETRL) has biased composition (acidic residues). Positions 1481–1483 (TRL) match the PDZ-binding motif.

Belongs to the ABC transporter superfamily. ABCC family. CFTR transporter (TC 3.A.1.202) subfamily. In terms of assembly, monomer; does not require oligomerization for channel activity. May form oligomers in the membrane. Interacts with SLC26A3, SLC26A6 and NHERF1. Interacts with SHANK2. Interacts with MYO6. Interacts (via C-terminus) with GOPC (via PDZ domain); this promotes CFTR internalization and thereby decreases channel activity. Interacts with SLC4A7 through NHERF1. Found in a complex with MYO5B and RAB11A. Interacts with ANO1. Interacts with SLC26A8. Interacts with AHCYL1; the interaction increases CFTR activity. Interacts with CSE1L. The core-glycosylated form interacts with GORASP2 (via PDZ GRASP-type 1 domain) in respone to ER stress. Interacts with MARCHF2; the interaction leads to CFTR ubiqtuitination and degradation. Interacts with ADGRG2. In terms of processing, N-glycosylated. Phosphorylated; cAMP treatment promotes phosphorylation and activates the channel. Dephosphorylation decreases the ATPase activity (in vitro). Phosphorylation at PKA sites activates the channel. Phosphorylation at PKC sites enhances the response to phosphorylation by PKA. Phosphorylated by AMPK; this inhibits channel activity. Post-translationally, ubiquitinated, leading to its degradation in the lysosome. Deubiquitination by USP10 in early endosomes enhances its endocytic recycling to the cell membrane. Ubiquitinated by RNF185 during ER stress. Ubiquitinated by MARCHF2.

It localises to the apical cell membrane. The protein resides in the early endosome membrane. The protein localises to the cell membrane. Its subcellular location is the recycling endosome membrane. It is found in the endoplasmic reticulum membrane. It localises to the nucleus. The catalysed reaction is ATP + H2O + closed Cl(-) channel = ADP + phosphate + open Cl(-) channel.. It catalyses the reaction chloride(in) = chloride(out). The enzyme catalyses hydrogencarbonate(in) = hydrogencarbonate(out). It carries out the reaction ATP + H2O = ADP + phosphate + H(+). Functionally, epithelial ion channel that plays an important role in the regulation of epithelial ion and water transport and fluid homeostasis. Mediates the transport of chloride ions across the cell membrane. The ion channel is also permeable to HCO(3)(-); selectivity depends on the extracellular chloride concentration. Exerts its function also by modulating the activity of other ion channels and transporters. Contributes to the regulation of the pH and the ion content of the epithelial fluid layer. Modulates the activity of the epithelial sodium channel (ENaC) complex, in part by regulating the cell surface expression of the ENaC complex. May regulate bicarbonate secretion and salvage in epithelial cells by regulating the transporter SLC4A7. Can inhibit the chloride channel activity of ANO1. Plays a role in the chloride and bicarbonate homeostasis during sperm epididymal maturation and capacitation. The protein is Cystic fibrosis transmembrane conductance regulator of Atelerix albiventris (Middle-African hedgehog).